The primary structure comprises 674 residues: DNA ligase (674 aa).

Residues 34-38, 84-85, and E116 contribute to the NAD(+) site; these read DAEYD and SL. The N6-AMP-lysine intermediate role is filled by K118. NAD(+) contacts are provided by R139, E174, K291, and K315. Zn(2+) is bound by residues C409, C412, C425, and C430. Residues 586–674 form the BRCT domain; that stretch reads REGEALKGLT…TGKDPRALTA (89 aa).

Belongs to the NAD-dependent DNA ligase family. LigA subfamily. Mg(2+) serves as cofactor. It depends on Mn(2+) as a cofactor.

It catalyses the reaction NAD(+) + (deoxyribonucleotide)n-3'-hydroxyl + 5'-phospho-(deoxyribonucleotide)m = (deoxyribonucleotide)n+m + AMP + beta-nicotinamide D-nucleotide.. Functionally, DNA ligase that catalyzes the formation of phosphodiester linkages between 5'-phosphoryl and 3'-hydroxyl groups in double-stranded DNA using NAD as a coenzyme and as the energy source for the reaction. It is essential for DNA replication and repair of damaged DNA. The sequence is that of DNA ligase from Thermus sp. (strain AK16D).